The chain runs to 146 residues: Large ribosomal subunit protein uL13 (146 aa).

The protein belongs to the universal ribosomal protein uL13 family. In terms of assembly, part of the 50S ribosomal subunit.

Its function is as follows. This protein is one of the early assembly proteins of the 50S ribosomal subunit, although it is not seen to bind rRNA by itself. It is important during the early stages of 50S assembly. This is Large ribosomal subunit protein uL13 from Borreliella burgdorferi (strain ATCC 35210 / DSM 4680 / CIP 102532 / B31) (Borrelia burgdorferi).